The primary structure comprises 1861 residues: Protein TANC1 (1861 aa).

Met1 carries the post-translational modification N-acetylmethionine. Disordered regions lie at residues Met1–Pro46, Ser63–Arg99, Lys206–Gly225, Gln257–Pro311, and Gln439–Glu486. The span at Lys8 to Gly21 shows a compositional bias: basic and acidic residues. Phosphoserine is present on residues Ser63, Ser66, Ser67, Ser207, and Ser270. Residues Lys206–Leu219 are compositionally biased toward polar residues. Residues Ile440–Thr455 are compositionally biased toward polar residues. Residues Thr461–Leu480 show a composition bias toward low complexity. Phosphoserine is present on Ser465. 11 ANK repeats span residues Glu896–Tyr928, Asn934–Gly963, Asn967–His996, Lys1000–Pro1029, Ala1040–Val1069, Trp1078–Arg1107, Arg1111–Leu1140, Gln1144–Ser1173, Glu1177–Gln1206, Asn1210–His1239, and Ser1243–Asn1272. TPR repeat units lie at residues Leu1289–Glu1322, Val1336–Ser1369, and Glu1371–Asn1403. The segment covering Gln1421 to Pro1431 has biased composition (low complexity). 2 disordered regions span residues Gln1421 to Ser1485 and Val1636 to Gly1696. Phosphoserine is present on Ser1439. 2 stretches are compositionally biased toward low complexity: residues Gln1467–Ser1485 and Ser1659–Ser1689. 3 positions are modified to phosphoserine: Ser1668, Ser1676, and Ser1677.

It belongs to the TANC family. In terms of assembly, interacts probably directly with DLG1, DLG4, HOMER1. Interacts with DLGAP1, INA, CAMK2A, GRIN2B and GRIA1. Interacts with TNIK. Interacts with MINK1. In terms of processing, phosphorylated; by MINK1 and TNIK upon stimulation by RAP2A.

It localises to the postsynaptic density. In terms of biological role, may be a scaffold component in the postsynaptic density. The chain is Protein TANC1 (TANC1) from Homo sapiens (Human).